A 124-amino-acid polypeptide reads, in one-letter code: Transcription initiation factor IIA subunit 2 (124 aa).

The protein belongs to the TFIIA subunit 2 family. TFIIA is a heterodimer composed of the large TOA1 and the small TOA2 subunits.

Its subcellular location is the nucleus. Its function is as follows. TFIIA is a component of the transcription machinery of RNA polymerase II and plays an important role in transcriptional activation. TFIIA in a complex with tbp mediates transcriptional activity. In Cryptococcus neoformans var. neoformans serotype D (strain JEC21 / ATCC MYA-565) (Filobasidiella neoformans), this protein is Transcription initiation factor IIA subunit 2 (TOA2).